We begin with the raw amino-acid sequence, 255 residues long: Pimeloyl-[acyl-carrier protein] methyl ester esterase (255 aa).

Residues 16–241 (LVLLHGWGLN…AAHAPFISHP (226 aa)) form the AB hydrolase-1 domain. Substrate contacts are provided by residues Trp-22, 81 to 82 (SL), and 142 to 146 (FLALQ). Ser-81 acts as the Nucleophile in catalysis. Catalysis depends on residues Asp-206 and His-234. Residue His-234 coordinates substrate.

The protein belongs to the AB hydrolase superfamily. Carboxylesterase BioH family. In terms of assembly, monomer.

It localises to the cytoplasm. The enzyme catalyses 6-carboxyhexanoyl-[ACP] methyl ester + H2O = 6-carboxyhexanoyl-[ACP] + methanol + H(+). It participates in cofactor biosynthesis; biotin biosynthesis. Functionally, the physiological role of BioH is to remove the methyl group introduced by BioC when the pimeloyl moiety is complete. It allows to synthesize pimeloyl-ACP via the fatty acid synthetic pathway through the hydrolysis of the ester bonds of pimeloyl-ACP esters. Also displays a weak thioesterase activity. Can form a complex with CoA, and may be involved in the condensation of CoA and pimelic acid into pimeloyl-CoA, a precursor in biotin biosynthesis. This is Pimeloyl-[acyl-carrier protein] methyl ester esterase from Serratia marcescens.